A 1053-amino-acid chain; its full sequence is Focal adhesion kinase 1 (1053 aa).

The segment at 1–27 is disordered; that stretch reads MAAAYLDPNLNHTPSSSAKTHLGTGME. Over residues 10 to 19 the composition is skewed to polar residues; the sequence is LNHTPSSSAK. In terms of domain architecture, FERM spans 35-355; it reads RVLKVFHYFE…GYCRLVNGAT (321 aa). Tyr397 is modified (phosphotyrosine; by autocatalysis). Tyr407 carries the phosphotyrosine modification. The Protein kinase domain maps to 422–680; sequence IELGRCIGEG…ELKAQLSTIL (259 aa). Residues 428–434, Lys454, and 500–502 contribute to the ATP site; these read IGEGQFG and ELC. The active-site Proton acceptor is the Asp546. Phosphotyrosine; by SRC is present on residues Tyr576 and Tyr577. Positions 686 to 697 are enriched in basic and acidic residues; sequence QQEERMRMESRR. 2 disordered regions span residues 686–741 and 843–892; these read QQEE…QPNH and RGSI…LASL. At Tyr863 the chain carries Phosphotyrosine. Ser911 carries the post-translational modification Phosphoserine. Tyr926 bears the Phosphotyrosine mark.

Belongs to the protein kinase superfamily. Tyr protein kinase family. FAK subfamily. Interacts with ARHGAP26, GRB7, DCC, PIK3R1, PXN and SRC. Interacts with the ARP2/3 complex. In terms of processing, phosphorylated on tyrosine residues upon activation, e.g. upon integrin signaling. Tyr-397 is the major autophosphorylation site, but other kinases can also phosphorylate this residue. Phosphorylation at Tyr-397 promotes interaction with SRC and SRC family members, leading to phosphorylation at Tyr-576, Tyr-577 and at additional tyrosine residues. Isoform 2 is phosphorylated on serine or threonine residues, but apparently not on tyrosine residues.

The protein localises to the cell junction. It localises to the focal adhesion. Its subcellular location is the cell membrane. It is found in the cytoplasm. The protein resides in the perinuclear region. The protein localises to the cell cortex. It localises to the cytoskeleton. Its subcellular location is the microtubule organizing center. It is found in the centrosome. The protein resides in the nucleus. The protein localises to the cilium basal body. The enzyme catalyses L-tyrosyl-[protein] + ATP = O-phospho-L-tyrosyl-[protein] + ADP + H(+). Subject to autoinhibition, mediated by interactions between the FERM domain and the kinase domain. Activated by autophosphorylation at Tyr-397. This promotes interaction with SRC and phosphorylation at Tyr-576 and Tyr-577 in the kinase activation loop. Phosphorylation at Tyr-576 and Tyr-577 is required for maximal kinase activity. Inhibited by TAE226. Its function is as follows. Non-receptor protein-tyrosine kinase that plays an essential role in regulating cell migration, adhesion, spreading, reorganization of the actin cytoskeleton, formation and disassembly of focal adhesions and cell protrusions, cell cycle progression, cell proliferation and apoptosis. Required for early embryonic development, embryonic angiogenesis, normal cardiomyocyte migration and proliferation, and normal heart development. Regulates axon growth and neuronal cell migration, axon branching and synapse formation; required for normal development of the nervous system. Plays a role in osteogenesis and differentiation of osteoblasts. Functions in integrin signal transduction, but also in signaling downstream of numerous growth factor receptors, G-protein coupled receptors (GPCR), ephrin receptors, netrin receptors and LDL receptors. Forms multisubunit signaling complexes with SRC and SRC family members upon activation; this leads to the phosphorylation of additional tyrosine residues, creating binding sites for scaffold proteins, effectors and substrates. Regulates numerous signaling pathways. Promotes activation of phosphatidylinositol 3-kinase and the AKT1 signaling cascade. Promotes activation of MAPK1/ERK2, MAPK3/ERK1 and the MAP kinase signaling cascade. Promotes localized and transient activation of guanine nucleotide exchange factors (GEFs) and GTPase-activating proteins (GAPs), and thereby modulates the activity of Rho family GTPases. Signaling via CAS family members mediates activation of RAC1. Regulates P53/TP53 activity and stability. Phosphorylates SRC; this increases SRC kinase activity. Isoform 2 (FRNK) does not contain a kinase domain and inhibits PTK2/FAK1 phosphorylation and signaling. The sequence is that of Focal adhesion kinase 1 (PTK2) from Gallus gallus (Chicken).